A 49-amino-acid chain; its full sequence is DNA-directed RNA polymerase subunit Rpo12 (49 aa).

Cys-11, Cys-27, and Cys-30 together coordinate Zn(2+).

It belongs to the archaeal Rpo12/eukaryotic RPC10 RNA polymerase subunit family. Part of the RNA polymerase complex. The cofactor is Zn(2+).

The protein resides in the cytoplasm. The enzyme catalyses RNA(n) + a ribonucleoside 5'-triphosphate = RNA(n+1) + diphosphate. Its function is as follows. DNA-dependent RNA polymerase (RNAP) catalyzes the transcription of DNA into RNA using the four ribonucleoside triphosphates as substrates. The chain is DNA-directed RNA polymerase subunit Rpo12 from Pyrococcus furiosus (strain ATCC 43587 / DSM 3638 / JCM 8422 / Vc1).